The sequence spans 429 residues: 4-hydroxybutyrate coenzyme A transferase (429 aa).

CoA is bound at residue 215–219 (GIGAI). Catalysis depends on Glu238, which acts as the 5-glutamyl coenzyme A thioester intermediate. Gly336 lines the CoA pocket.

It belongs to the acetyl-CoA hydrolase/transferase family.

This is 4-hydroxybutyrate coenzyme A transferase (cat2) from Clostridium kluyveri (strain ATCC 8527 / DSM 555 / NBRC 12016 / NCIMB 10680 / K1).